We begin with the raw amino-acid sequence, 1175 residues long: Pyruvate carboxylase 1 (1175 aa).

Positions 31–481 (EFNKVMVANR…DTYFIDEHPE (451 aa)) constitute a Biotin carboxylation domain. Positions 147, 231, and 266 each coordinate ATP. The 198-residue stretch at 151–348 (RQAAIEAGVQ…LVQAQIRIAE (198 aa)) folds into the ATP-grasp domain. R323 is an active-site residue. In terms of domain architecture, Pyruvate carboxyltransferase spans 559–828 (CMITDTTFRD…DTGLSLDDIS (270 aa)). Substrate contacts are provided by residues 567–571 (RDAHQ) and R640. D568 contributes to the a divalent metal cation binding site. Residues K737, H767, and H769 each coordinate a divalent metal cation. The residue at position 737 (K737) is an N6-carboxylysine. T904 is a binding site for substrate. The 76-residue stretch at 1099 to 1174 (RALPGVRGHI…SAGDLVVEVE (76 aa)) folds into the Biotinyl-binding domain. Position 1140 is an N6-biotinyllysine (K1140).

Interacts with sir-2.2 and sir-2.3. It depends on biotin as a cofactor. The cofactor is Zn(2+).

It is found in the cytoplasm. It catalyses the reaction hydrogencarbonate + pyruvate + ATP = oxaloacetate + ADP + phosphate + H(+). It participates in carbohydrate biosynthesis; gluconeogenesis. Its function is as follows. Pyruvate carboxylase catalyzes a 2-step reaction, involving the ATP-dependent carboxylation of the covalently attached biotin in the first step and the transfer of the carboxyl group to pyruvate in the second. In Caenorhabditis elegans, this protein is Pyruvate carboxylase 1.